The chain runs to 440 residues: Serine/threonine-protein kinase toxin HipA (440 aa).

S150 bears the Phosphoserine; by autocatalysis mark. Residues 152–157, K181, and 234–236 contribute to the ATP site; these read AGAQEK and ERF. D309 functions as the Proton acceptor in the catalytic mechanism. ATP-binding positions include 311 to 314 and 331 to 332; these read HAKN and YD. Residues 379–382 mediate DNA binding; the sequence is KVLR.

Belongs to the HipA Ser/Thr kinase family. In terms of assembly, forms a HipA(2)HipB(2) heterotetramer which can interact with a single operator on DNA. When 2 operators are present each HipB dimer contacts 1 HipA molecule, which are brought together by the DNA bend and dimerize, blocking the HipA active site and inactivating its toxic activity. Mutations present in allele hipA7 (G22S and D291A) decrease the affinity of HipA for HipB. Post-translationally, autophosphorylates intermolecularly on Ser-150; phosphorylated form not seen to bind ATP and no longer has kinase activity.

It catalyses the reaction L-seryl-[protein] + ATP = O-phospho-L-seryl-[protein] + ADP + H(+). It carries out the reaction L-threonyl-[protein] + ATP = O-phospho-L-threonyl-[protein] + ADP + H(+). With respect to regulation, once phosphorylated no longer has kinase activity. Functionally, toxic component of a type II toxin-antitoxin (TA) system, first identified by mutations that increase production of persister cells, a fraction of cells that are phenotypic variants not killed by antibiotics, which lead to multidrug tolerance. Persistence may be ultimately due to global remodeling of the persister cell's ribosomes. Phosphorylates Glu-tRNA-ligase (AC P04805, gltX, on 'Ser-239') in vivo. Phosphorylation of GltX prevents it from being charged, leading to an increase in uncharged tRNA(Glu). This induces amino acid starvation and the stringent response via RelA/SpoT and increased (p)ppGpp levels, which inhibits replication, transcription, translation and cell wall synthesis, reducing growth and leading to persistence and multidrug resistance. Once the level of HipA exceeds a threshold cells become dormant, and the length of dormancy is determined by how much HipA levels exceed the threshold. The hipA7 mutation (a double G22S D291A mutation) leads to increased generation of persister cells (cells that survive antibiotic treatment) probably by entering into a dormant state, as well as cold-sensitivity. Wild-type cells produce persisters at a frequency of 10(-6) to 10(-5) whereas hipA7 cells produce about 100-fold more persisters. hipA7 decreases the affinity for antitoxin HipB, leading to increased HipA levels and persistence; depending on the protein level, can be toxic enough to reduce cell growth or even kill cells. Generation of persister cells requires (p)ppGpp as cells lacking relA or relA/spoT generate fewer or no persister cells respectively compared to hipA7. The toxic effect of HipA is neutralized by its cognate antitoxin HipB. Also neutralized by overexpression of gltX. With HipB acts as a corepressor for transcription of the hipBA promoter; binding of HipA-HipB to DNA induces a 70 degree bend. This brings together and dimerizes 2 HipA molecules, which distorts the promoter region, preventing sigma-factor binding; additionally HipA and HipB would physically prevent RNA core polymerase from contacting the -35 promoter box. May play a role in biofilm formation. This is Serine/threonine-protein kinase toxin HipA (hipA) from Escherichia coli (strain K12).